The primary structure comprises 493 residues: Membrane-bound lytic murein transglycosylase F (493 aa).

The signal sequence occupies residues 1-21 (MKRLRFNYLLIGLITVLLALA). The interval 22-268 (LWPSIPWYGG…RLDEKYLGHV (247 aa)) is non-LT domain. The tract at residues 269 to 493 (GTFDYVDTRT…LNPVSALPLP (225 aa)) is LT domain. Residue Glu-313 is part of the active site.

It in the N-terminal section; belongs to the bacterial solute-binding protein 3 family. In the C-terminal section; belongs to the transglycosylase Slt family.

The protein localises to the cell outer membrane. The enzyme catalyses Exolytic cleavage of the (1-&gt;4)-beta-glycosidic linkage between N-acetylmuramic acid (MurNAc) and N-acetylglucosamine (GlcNAc) residues in peptidoglycan, from either the reducing or the non-reducing ends of the peptidoglycan chains, with concomitant formation of a 1,6-anhydrobond in the MurNAc residue.. In terms of biological role, murein-degrading enzyme that degrades murein glycan strands and insoluble, high-molecular weight murein sacculi, with the concomitant formation of a 1,6-anhydromuramoyl product. Lytic transglycosylases (LTs) play an integral role in the metabolism of the peptidoglycan (PG) sacculus. Their lytic action creates space within the PG sacculus to allow for its expansion as well as for the insertion of various structures such as secretion systems and flagella. This chain is Membrane-bound lytic murein transglycosylase F, found in Erwinia tasmaniensis (strain DSM 17950 / CFBP 7177 / CIP 109463 / NCPPB 4357 / Et1/99).